A 332-amino-acid chain; its full sequence is C4-dicarboxylate-binding periplasmic protein DctP (332 aa).

An N-terminal signal peptide occupies residues 1–22 (MFKPLTLIAASILAVTSFNAAA).

This sequence belongs to the bacterial solute-binding protein 7 family. The complex comprises the extracytoplasmic solute receptor protein DctP, and the two transmembrane proteins DctQ and DctM.

The protein localises to the periplasm. Part of the tripartite ATP-independent periplasmic (TRAP) transport system DctPQM involved in C4-dicarboxylates uptake. The protein is C4-dicarboxylate-binding periplasmic protein DctP of Vibrio cholerae serotype O1 (strain ATCC 39315 / El Tor Inaba N16961).